The following is a 353-amino-acid chain: Chorismate synthase (353 aa).

Residues R48 and R54 each coordinate NADP(+). Residues 125 to 127, 238 to 239, G278, 293 to 297, and R319 each bind FMN; these read RSS, NA, and KPTSS.

This sequence belongs to the chorismate synthase family. As to quaternary structure, homotetramer. The cofactor is FMNH2.

The catalysed reaction is 5-O-(1-carboxyvinyl)-3-phosphoshikimate = chorismate + phosphate. It participates in metabolic intermediate biosynthesis; chorismate biosynthesis; chorismate from D-erythrose 4-phosphate and phosphoenolpyruvate: step 7/7. In terms of biological role, catalyzes the anti-1,4-elimination of the C-3 phosphate and the C-6 proR hydrogen from 5-enolpyruvylshikimate-3-phosphate (EPSP) to yield chorismate, which is the branch point compound that serves as the starting substrate for the three terminal pathways of aromatic amino acid biosynthesis. This reaction introduces a second double bond into the aromatic ring system. The polypeptide is Chorismate synthase (Bordetella pertussis (strain Tohama I / ATCC BAA-589 / NCTC 13251)).